A 235-amino-acid polypeptide reads, in one-letter code: NADH-quinone oxidoreductase subunit C (235 aa).

The protein belongs to the complex I 30 kDa subunit family. In terms of assembly, NDH-1 is composed of 14 different subunits. Subunits NuoB, C, D, E, F, and G constitute the peripheral sector of the complex.

The protein resides in the cell membrane. It catalyses the reaction a quinone + NADH + 5 H(+)(in) = a quinol + NAD(+) + 4 H(+)(out). In terms of biological role, NDH-1 shuttles electrons from NADH, via FMN and iron-sulfur (Fe-S) centers, to quinones in the respiratory chain. The immediate electron acceptor for the enzyme in this species is believed to be a menaquinone. Couples the redox reaction to proton translocation (for every two electrons transferred, four hydrogen ions are translocated across the cytoplasmic membrane), and thus conserves the redox energy in a proton gradient. This chain is NADH-quinone oxidoreductase subunit C, found in Mycobacterium avium (strain 104).